A 1247-amino-acid polypeptide reads, in one-letter code: ABC transporter B family member 14 (1247 aa).

An ABC transmembrane type-1 1 domain is found at 48–337; sequence MFLGGLGTCI…AVPSLSAISK (290 aa). 6 helical membrane-spanning segments follow: residues 49 to 69, 95 to 115, 172 to 192, 196 to 216, 277 to 297, and 315 to 335; these read FLGGLGTCIHGGTLPLFFVFF, LYLVYLGLVNLVSAWIGVACW, HVLRYLCQFIAGFVIGFLSVW, LLTLGVVPLIAIAGGGYAIVM, LGVGLTYSLLFCAWALLFWYA, and ILNVIYSGFALGQAVPSLSAI. N-linked (GlcNAc...) asparagine glycosylation is found at Asn362 and Asn392. Residues 373-608 form the ABC transporter 1 domain; the sequence is IEFCGVSFAY…GGDYATLVNC (236 aa). 407 to 414 contributes to the ATP binding site; that stretch reads GPSGSGKS. An ABC transmembrane type-1 2 domain is found at 679–971; the sequence is EWLYALLGSI…TLALTPDIVK (293 aa). 2 helical membrane passes run 680-700 and 727-747; these read WLYALLGSIGAVLAGSQPALF and AIIFVGAGIVTAPIYILQHYF. N-linked (GlcNAc...) asparagine glycosylation occurs at Asn780. 3 helical membrane passes run 807-824, 830-850, and 915-935; these read IVQNLSLTITALALAFFY, AVVTACFPLLIAASLTEQLFL, and LSQCLAFCSYALGLWYISVLI. Residue Asn938 is glycosylated (N-linked (GlcNAc...) asparagine). The chain crosses the membrane as a helical span at residues 949–969; the sequence is FMVLLVTAYSVAETLALTPDI. The region spanning 1006–1242 is the ABC transporter 2 domain; the sequence is IEFRNVSFAY…SDGFYKKLTS (237 aa). N-linked (GlcNAc...) asparagine glycosylation is present at Asn1010. 1041–1048 provides a ligand contact to ATP; the sequence is GPSGSGKS. An N-linked (GlcNAc...) asparagine glycan is attached at Asn1108.

This sequence belongs to the ABC transporter superfamily. ABCB family. Multidrug resistance exporter (TC 3.A.1.201) subfamily.

Its subcellular location is the membrane. This is ABC transporter B family member 14 (ABCB14) from Arabidopsis thaliana (Mouse-ear cress).